We begin with the raw amino-acid sequence, 424 residues long: Serine hydroxymethyltransferase 2 (424 aa).

Residues L125 and 129–131 (GHL) each bind (6S)-5,6,7,8-tetrahydrofolate. At K234 the chain carries N6-(pyridoxal phosphate)lysine. E250 serves as a coordination point for (6S)-5,6,7,8-tetrahydrofolate.

It belongs to the SHMT family. In terms of assembly, homodimer. Pyridoxal 5'-phosphate is required as a cofactor.

It localises to the cytoplasm. The enzyme catalyses (6R)-5,10-methylene-5,6,7,8-tetrahydrofolate + glycine + H2O = (6S)-5,6,7,8-tetrahydrofolate + L-serine. It functions in the pathway one-carbon metabolism; tetrahydrofolate interconversion. The protein operates within amino-acid biosynthesis; glycine biosynthesis; glycine from L-serine: step 1/1. Its function is as follows. Catalyzes the reversible interconversion of serine and glycine with tetrahydrofolate (THF) serving as the one-carbon carrier. This reaction serves as the major source of one-carbon groups required for the biosynthesis of purines, thymidylate, methionine, and other important biomolecules. Also exhibits THF-independent aldolase activity toward beta-hydroxyamino acids, producing glycine and aldehydes, via a retro-aldol mechanism. In Cupriavidus pinatubonensis (strain JMP 134 / LMG 1197) (Cupriavidus necator (strain JMP 134)), this protein is Serine hydroxymethyltransferase 2.